Consider the following 220-residue polypeptide: Large ribosomal subunit protein uL4 (220 aa).

A disordered region spans residues 45 to 102 (AARQGTHKTKTRGEVRGGGRKPFRQKGTGRARQGSIRAPHYTGGGTVHGPVPRDYSQR). Positions 62-73 (GGRKPFRQKGTG) are enriched in basic residues.

It belongs to the universal ribosomal protein uL4 family. As to quaternary structure, part of the 50S ribosomal subunit.

In terms of biological role, one of the primary rRNA binding proteins, this protein initially binds near the 5'-end of the 23S rRNA. It is important during the early stages of 50S assembly. It makes multiple contacts with different domains of the 23S rRNA in the assembled 50S subunit and ribosome. Its function is as follows. Forms part of the polypeptide exit tunnel. The sequence is that of Large ribosomal subunit protein uL4 from Corynebacterium aurimucosum (strain ATCC 700975 / DSM 44827 / CIP 107346 / CN-1) (Corynebacterium nigricans).